The primary structure comprises 355 residues: Neurogenic differentiation factor 1 (355 aa).

Residues 1–93 (MTKSYSESGL…GPKKKKMTKA (93 aa)) are disordered. Acidic residues predominate over residues 58 to 77 (DEEDEDEDLEEEDEEEEEDD). Residues 80-92 (PKRRGPKKKKMTK) are compositionally biased toward basic residues. A Nuclear localization signal motif is present at residues 86-92 (KKKKMTK). The bHLH domain occupies 100 to 152 (LRRMKANARERNRMHGLNAALDNLRKVVPCYSKTQKLSKIETLRLAKNYIWAL). Phosphoserine is present on residues serine 161, serine 258, serine 265, and serine 273. Serine 334 bears the Phosphoserine; by CaMK2 mark.

As to quaternary structure, efficient DNA-binding requires dimerization with another bHLH protein. Heterodimer with TCF3/E47; the heterodimer is inhibited in presence of ID2, but not NR0B2, to E-box element. Interacts with EP300; the interaction is inhibited by NR0B2. Interacts with RREB1. Interacts with ATOH8. In terms of processing, phosphorylated. In islet cells, phosphorylated on Ser-273 upon glucose stimulation; which may be required for nuclear localization. In activated neurons, phosphorylated on Ser-334; which promotes dendritic growth. Phosphorylated by MAPK1; phosphorylation regulates heterodimerization and DNA-binding activities. Phosphorylation on Ser-265 and Ser-273 increases transactivation on the insulin promoter in glucose-stimulated insulinoma cells. Most abundant in pancreatic alpha- and beta-cells, less in brain and intestine.

The protein localises to the cytoplasm. It is found in the nucleus. Functionally, acts as a transcriptional activator: mediates transcriptional activation by binding to E box-containing promoter consensus core sequences 5'-CANNTG-3'. Associates with the p300/CBP transcription coactivator complex to stimulate transcription of the secretin gene as well as the gene encoding the cyclin-dependent kinase inhibitor CDKN1A. Contributes to the regulation of several cell differentiation pathways, like those that promote the formation of early retinal ganglion cells, inner ear sensory neurons, granule cells forming either the cerebellum or the dentate gyrus cell layer of the hippocampus, endocrine islet cells of the pancreas and enteroendocrine cells of the small intestine. Together with PAX6 or SIX3, is required for the regulation of amacrine cell fate specification. Also required for dendrite morphogenesis and maintenance in the cerebellar cortex. Associates with chromatin to enhancer regulatory elements in genes encoding key transcriptional regulators of neurogenesis. This is Neurogenic differentiation factor 1 (NEUROD1) from Mesocricetus auratus (Golden hamster).